The sequence spans 523 residues: Apolipoprotein N-acyltransferase (523 aa).

A run of 7 helical transmembrane segments spans residues 26–46 (LRFA…AFAP), 49–66 (WWWL…LVRQ), 74–94 (AWVG…WLYI), 109–129 (AAVL…AWLW), 137–157 (QLSG…SEWL), 185–205 (LVGV…LCAA), and 212–232 (WLAG…HTIA). The CN hydrolase domain occupies 246-487 (LQGNVPQDVK…LGTLQADVQG (242 aa)). Glu-284 acts as the Proton acceptor in catalysis. Residue Lys-345 is part of the active site. The active-site Nucleophile is the Cys-395. The helical transmembrane segment at 494–514 (FVRTGNAPALGAGVLVLLAAL) threads the bilayer.

Belongs to the CN hydrolase family. Apolipoprotein N-acyltransferase subfamily.

It localises to the cell inner membrane. It carries out the reaction N-terminal S-1,2-diacyl-sn-glyceryl-L-cysteinyl-[lipoprotein] + a glycerophospholipid = N-acyl-S-1,2-diacyl-sn-glyceryl-L-cysteinyl-[lipoprotein] + a 2-acyl-sn-glycero-3-phospholipid + H(+). Its pathway is protein modification; lipoprotein biosynthesis (N-acyl transfer). Its function is as follows. Catalyzes the phospholipid dependent N-acylation of the N-terminal cysteine of apolipoprotein, the last step in lipoprotein maturation. This chain is Apolipoprotein N-acyltransferase, found in Ralstonia nicotianae (strain ATCC BAA-1114 / GMI1000) (Ralstonia solanacearum).